The sequence spans 507 residues: ATP synthase subunit alpha, chloroplastic (507 aa).

Position 170-177 (170-177) interacts with ATP; sequence GDRQTGKT. Threonine 257 bears the Phosphothreonine mark.

Belongs to the ATPase alpha/beta chains family. In terms of assembly, F-type ATPases have 2 components, CF(1) - the catalytic core - and CF(0) - the membrane proton channel. CF(1) has five subunits: alpha(3), beta(3), gamma(1), delta(1), epsilon(1). CF(0) has four main subunits: a, b, b' and c.

The protein localises to the plastid. Its subcellular location is the chloroplast thylakoid membrane. It carries out the reaction ATP + H2O + 4 H(+)(in) = ADP + phosphate + 5 H(+)(out). Its function is as follows. Produces ATP from ADP in the presence of a proton gradient across the membrane. The alpha chain is a regulatory subunit. This Crucihimalaya wallichii (Rock-cress) protein is ATP synthase subunit alpha, chloroplastic.